Here is a 416-residue protein sequence, read N- to C-terminus: Gamma-glutamyl phosphate reductase (416 aa).

The protein belongs to the gamma-glutamyl phosphate reductase family.

Its subcellular location is the cytoplasm. It carries out the reaction L-glutamate 5-semialdehyde + phosphate + NADP(+) = L-glutamyl 5-phosphate + NADPH + H(+). It participates in amino-acid biosynthesis; L-proline biosynthesis; L-glutamate 5-semialdehyde from L-glutamate: step 2/2. Catalyzes the NADPH-dependent reduction of L-glutamate 5-phosphate into L-glutamate 5-semialdehyde and phosphate. The product spontaneously undergoes cyclization to form 1-pyrroline-5-carboxylate. The polypeptide is Gamma-glutamyl phosphate reductase (Streptococcus uberis (strain ATCC BAA-854 / 0140J)).